The following is a 517-amino-acid chain: 2,4,6-trichlorophenol monooxygenase (517 aa).

It belongs to the FADH(2)-utilizing monooxygenase family. As to quaternary structure, homotetramer in solution.

The enzyme catalyses 2,4,6-trichlorophenol + FADH2 + O2 = 2-chloro-6-hydroxy-1,4-benzoquinone + FAD + 2 chloride + 3 H(+). It catalyses the reaction 2,4,6-trichlorophenol + FADH2 + O2 = 2,6-dichlorobenzoquinone + FAD + chloride + H2O + H(+). It carries out the reaction 2,6-dichlorobenzoquinone + H2O = 2-chloro-6-hydroxy-1,4-benzoquinone + chloride + 2 H(+). Its pathway is aromatic compound metabolism. It participates in xenobiotic degradation. Involved in the degradation of 2,4,6-trichlorophenol (2,4,6-TCP). Catalyzes the conversion of 2,4,6-TCP to 6-chlorohydroxyquinol (6-CHQ). The monooxygenase oxidizes 2,4,6-TCP to 2,6-dichloroquinone (2,6-DCBQ), which remains with the enzyme and is hydrolyzed to 2-chlorohydroxyquinone. 2-chlorohydroxyquinone is chemically reduced by ascorbate and NADH to 6-chlorohydroxyquinol (6-CHQ). The sequence is that of 2,4,6-trichlorophenol monooxygenase from Cupriavidus pinatubonensis (strain JMP 134 / LMG 1197) (Cupriavidus necator (strain JMP 134)).